A 540-amino-acid polypeptide reads, in one-letter code: Telomerase Cajal body protein 1 (540 aa).

Residues M1–A10 are compositionally biased toward pro residues. Positions M1–E126 are disordered. S26, S30, S54, S64, S85, and S90 each carry phosphoserine. Positions P116 to E126 are enriched in acidic residues. WD repeat units follow at residues Q158–G197, E213–S258, N263–E304, G314–G355, G356–W396, and V402–K441. T480 bears the Phosphothreonine mark. S482 carries the phosphoserine modification. The tract at residues S520–T540 is disordered. Residues R531 to T540 are compositionally biased toward gly residues.

This sequence belongs to the TCAB1 family. As to quaternary structure, component of the telomerase holoenzyme complex composed of one molecule of TERT, one molecule of WRAP53/TCAB1, two molecules of H/ACA ribonucleoprotein complex subunits DKC1, NOP10, NHP2 and GAR1, and a telomerase RNA template component (TERC). The telomerase holoenzyme complex is associated with TEP1, SMG6/EST1A and POT1. Interacts with the chaperonin-containing T-complex (TRiC) complex; which mediates the folding of WRAP53/TCAB1. Interacts with COIL. Interacts with SMN1. Interacts with RNF8. Interacts with histone H2AX. Phosphorylated at Ser-64 by ATM in response to DNA damage, promoting its interaction with histone H2AX and localization to sites of DNA double-strand breaks.

Its subcellular location is the nucleus. The protein localises to the cajal body. It localises to the chromosome. The protein resides in the telomere. Its function is as follows. RNA chaperone that plays a key role in telomere maintenance and RNA localization to Cajal bodies. Specifically recognizes and binds the Cajal body box (CAB box) present in both small Cajal body RNAs (scaRNAs) and telomerase RNA template component (TERC). Essential component of the telomerase holoenzyme complex, a ribonucleoprotein complex essential for the replication of chromosome termini that elongates telomeres in most eukaryotes. In the telomerase holoenzyme complex, required to stimulate the catalytic activity of the complex. Acts by specifically binding the CAB box of the TERC RNA and controlling the folding of the CR4/CR5 region of the TERC RNA, a critical step for telomerase activity. In addition, also controls telomerase holoenzyme complex localization to Cajal body. During S phase, required for delivery of TERC to telomeres during S phase and for telomerase activity. In addition to its role in telomere maintenance, also required for Cajal body formation, probably by mediating localization of scaRNAs to Cajal bodies. Also plays a role in DNA repair: phosphorylated by ATM in response to DNA damage and relocalizes to sites of DNA double-strand breaks to promote the repair of DNA double-strand breaks. Acts by recruiting the ubiquitin ligase RNF8 to DNA breaks and promote both homologous recombination (HR) and non-homologous end joining (NHEJ). This is Telomerase Cajal body protein 1 from Bos taurus (Bovine).